The chain runs to 348 residues: MTAPSQVLKIRRPDDWHLHLRDGDMLKTVVPYTSEIYGRAIVMPNLAPPVTTVEAAVAYRQRILHAVPAGHDFTPLMTCYLTDSLDPNELERGFNEGVFTAAKLYPANATTNSSHGVTSVDAIMPVLERMEKIGMPLLVHGEVTHADIDIFDREARFIESVMEPLRQRLTALKVVFEHITTKDAADYVRDGNERLAATITPQHLMFNRNHMLVGGVRPHLYCLPILKRNIHQQALRELVASGFNRVFLGTDSAPHARHRKESSCGCAGCFNAPTALGSYATVFEEMNALQHFEAFCSVNGPQFYGLPVNDTFIELVREEHQVAESIALTDDTLVPFLAGETVRWSVKQ.

2 residues coordinate Zn(2+): His-17 and His-19. Substrate is bound by residues 19–21 (HLR) and Asn-45. Positions 103, 140, and 178 each coordinate Zn(2+). Lys-103 carries the N6-carboxylysine modification. A substrate-binding site is contributed by His-140. Leu-223 is a substrate binding site. Asp-251 provides a ligand contact to Zn(2+). Residue Asp-251 is part of the active site. Substrate contacts are provided by His-255 and Ala-267.

This sequence belongs to the metallo-dependent hydrolases superfamily. DHOase family. Class II DHOase subfamily. Homodimer. It depends on Zn(2+) as a cofactor.

The catalysed reaction is (S)-dihydroorotate + H2O = N-carbamoyl-L-aspartate + H(+). It functions in the pathway pyrimidine metabolism; UMP biosynthesis via de novo pathway; (S)-dihydroorotate from bicarbonate: step 3/3. Catalyzes the reversible cyclization of carbamoyl aspartate to dihydroorotate. The polypeptide is Dihydroorotase (Escherichia coli O157:H7).